Here is a 459-residue protein sequence, read N- to C-terminus: ATP synthase subunit beta (459 aa).

An ATP-binding site is contributed by 148–155; sequence GGAGVGKT.

It belongs to the ATPase alpha/beta chains family. F-type ATPases have 2 components, CF(1) - the catalytic core - and CF(0) - the membrane proton channel. CF(1) has five subunits: alpha(3), beta(3), gamma(1), delta(1), epsilon(1). CF(0) has three main subunits: a(1), b(2) and c(9-12). The alpha and beta chains form an alternating ring which encloses part of the gamma chain. CF(1) is attached to CF(0) by a central stalk formed by the gamma and epsilon chains, while a peripheral stalk is formed by the delta and b chains.

The protein localises to the cell inner membrane. The enzyme catalyses ATP + H2O + 4 H(+)(in) = ADP + phosphate + 5 H(+)(out). Produces ATP from ADP in the presence of a proton gradient across the membrane. The catalytic sites are hosted primarily by the beta subunits. This is ATP synthase subunit beta from Thioalkalivibrio sulfidiphilus (strain HL-EbGR7).